The chain runs to 568 residues: Small ribosomal subunit protein bS1 (568 aa).

S1 motif domains are found at residues 39-100 (KTVV…LSRE), 118-184 (GEFV…VSRR), 205-273 (GMVL…LGIK), 290-360 (GKQM…LSIK), 377-447 (GTII…LGIK), and 464-533 (GTIV…LSVK).

Belongs to the bacterial ribosomal protein bS1 family.

In terms of biological role, binds mRNA; thus facilitating recognition of the initiation point. It is needed to translate mRNA with a short Shine-Dalgarno (SD) purine-rich sequence. In Rickettsia conorii (strain ATCC VR-613 / Malish 7), this protein is Small ribosomal subunit protein bS1 (rpsA).